The sequence spans 356 residues: Guanine nucleotide-binding protein alpha-15 subunit (356 aa).

Residue Gly-2 is the site of N-myristoyl glycine attachment. Cys-5 is lipidated: S-palmitoyl cysteine. The G-alpha domain occupies 33–356; it reads GNQKLLLLGT…GRNLRGTGME (324 aa). The G1 motif stretch occupies residues 36–49; sequence KLLLLGTGECGKST. GTP is bound by residues 41-48, 177-183, 202-206, 271-274, and Ala-328; these read GTGECGKS, LRIRIPT, DVGGQ, and NKRD. Mg(2+) contacts are provided by Ser-48 and Thr-183. The interval 175-183 is G2 motif; it reads DMLRIRIPT. The tract at residues 198 to 207 is G3 motif; sequence FRIFDVGGQR. A G4 motif region spans residues 267 to 274; that stretch reads ILFLNKRD. The segment at 326–331 is G5 motif; it reads TCATDT.

Belongs to the G-alpha family. In terms of assembly, g proteins are composed of 3 units; alpha, beta and gamma. The alpha chain contains the guanine nucleotide binding site.

Its function is as follows. Guanine nucleotide-binding proteins (G proteins) are involved as modulators or transducers in various transmembrane signaling systems. The sequence is that of Guanine nucleotide-binding protein alpha-15 subunit (gpa-15) from Caenorhabditis briggsae.